The following is a 610-amino-acid chain: Protein Spindly-B (610 aa).

Positions 1-392 (MEESETVLKL…IDKVKDELSL (392 aa)) form a coiled coil. Positions 474-610 (TEAHGVSDAT…KPATAQCPQQ (137 aa)) are disordered. Basic and acidic residues-rich tracts occupy residues 493-511 (SDDKKLPKEDLSLSTKDQD) and 535-548 (RIMEDEKDTPDLNK). Residues 549–561 (RNPNNCTITSIHP) show a composition bias toward polar residues. Basic and acidic residues predominate over residues 570-583 (SELKKVDEEQEKRK).

The protein belongs to the Spindly family.

Its subcellular location is the chromosome. It localises to the centromere. It is found in the kinetochore. Functionally, required for the localization of dynein and dynactin to the mitotic kintochore. Dynein is believed to control the initial lateral interaction between the kinetochore and spindle microtubules and to facilitate the subsequent formation of end-on kinetochore-microtubule attachments mediated by the NDC80 complex. The sequence is that of Protein Spindly-B (spdl1-b) from Xenopus laevis (African clawed frog).